Here is a 238-residue protein sequence, read N- to C-terminus: D-aminoacyl-tRNA deacylase (238 aa).

This sequence belongs to the DtdA deacylase family. As to quaternary structure, monomer. It depends on Zn(2+) as a cofactor.

It catalyses the reaction a D-aminoacyl-tRNA + H2O = a tRNA + a D-alpha-amino acid + H(+). The enzyme catalyses glycyl-tRNA(Ala) + H2O = tRNA(Ala) + glycine + H(+). The catalysed reaction is D-tyrosyl-tRNA(Tyr) + H2O = D-tyrosine + tRNA(Tyr). Functionally, D-aminoacyl-tRNA deacylase with broad substrate specificity. By recycling D-aminoacyl-tRNA to D-amino acids and free tRNA molecules, this enzyme counteracts the toxicity associated with the formation of D-aminoacyl-tRNA entities in vivo. Catalyzes the hydrolysis of D-tyrosyl-tRNA(Tyr). The sequence is that of D-aminoacyl-tRNA deacylase from Saccharolobus solfataricus (strain ATCC 35092 / DSM 1617 / JCM 11322 / P2) (Sulfolobus solfataricus).